Reading from the N-terminus, the 315-residue chain is Methenyltetrahydromethanopterin cyclohydrolase (315 aa).

Belongs to the MCH family.

The protein resides in the cytoplasm. It catalyses the reaction 5,10-methenyl-5,6,7,8-tetrahydromethanopterin + H2O = N(5)-formyl-5,6,7,8-tetrahydromethanopterin + H(+). It participates in one-carbon metabolism; methanogenesis from CO(2); 5,10-methenyl-5,6,7,8-tetrahydromethanopterin from CO(2): step 3/3. In terms of biological role, catalyzes the reversible interconversion of 5-formyl-H(4)MPT to methenyl-H(4)MPT(+). This is Methenyltetrahydromethanopterin cyclohydrolase from Methanospirillum hungatei JF-1 (strain ATCC 27890 / DSM 864 / NBRC 100397 / JF-1).